Reading from the N-terminus, the 413-residue chain is Probable Xaa-Pro aminopeptidase UREG_07123 (413 aa).

Residues D194, D205, E340, and E379 each contribute to the Mn(2+) site.

The protein belongs to the peptidase M24B family. The cofactor is Mn(2+).

The catalysed reaction is Release of any N-terminal amino acid, including proline, that is linked to proline, even from a dipeptide or tripeptide.. Catalyzes the removal of a penultimate prolyl residue from the N-termini of peptides. This is Probable Xaa-Pro aminopeptidase UREG_07123 from Uncinocarpus reesii (strain UAMH 1704).